Reading from the N-terminus, the 354-residue chain is S-adenosylmethionine:tRNA ribosyltransferase-isomerase (354 aa).

It belongs to the QueA family. Monomer.

It localises to the cytoplasm. It catalyses the reaction 7-aminomethyl-7-carbaguanosine(34) in tRNA + S-adenosyl-L-methionine = epoxyqueuosine(34) in tRNA + adenine + L-methionine + 2 H(+). It functions in the pathway tRNA modification; tRNA-queuosine biosynthesis. In terms of biological role, transfers and isomerizes the ribose moiety from AdoMet to the 7-aminomethyl group of 7-deazaguanine (preQ1-tRNA) to give epoxyqueuosine (oQ-tRNA). The protein is S-adenosylmethionine:tRNA ribosyltransferase-isomerase of Salmonella heidelberg (strain SL476).